The sequence spans 354 residues: Methylthioribose-1-phosphate isomerase (354 aa).

Residues 58–60, Arg101, and Gln204 contribute to the substrate site; that span reads RGA. Asp245 acts as the Proton donor in catalysis. Residue 255 to 256 participates in substrate binding; sequence NK.

Belongs to the eIF-2B alpha/beta/delta subunits family. MtnA subfamily.

It carries out the reaction 5-(methylsulfanyl)-alpha-D-ribose 1-phosphate = 5-(methylsulfanyl)-D-ribulose 1-phosphate. Its pathway is amino-acid biosynthesis; L-methionine biosynthesis via salvage pathway; L-methionine from S-methyl-5-thio-alpha-D-ribose 1-phosphate: step 1/6. Functionally, catalyzes the interconversion of methylthioribose-1-phosphate (MTR-1-P) into methylthioribulose-1-phosphate (MTRu-1-P). The sequence is that of Methylthioribose-1-phosphate isomerase from Xylella fastidiosa (strain M23).